The sequence spans 2144 residues: Reducing polyketide synthase PKS2 (2144 aa).

One can recognise a Ketosynthase family 3 (KS3) domain in the interval 10–436 (PMPLAIIGMS…GSNSHCIVRA (427 aa)). Active-site for beta-ketoacyl synthase activity residues include cysteine 183, histidine 319, and histidine 360. Residues 538-855 (VFAFTGQGAQ…VPSLHRGQNA (318 aa)) are malonyl-CoA:ACP transacylase (MAT). Positions 924-1058 (HDLLGSINSS…ALVKCEATTD (135 aa)) are N-terminal hotdog fold. The dehydratase (DH) domain stretch occupies residues 924 to 1214 (HDLLGSINSS…RSYSIDGTTD (291 aa)). In terms of domain architecture, PKS/mFAS DH spans 924-1237 (HDLLGSINSS…LAVEATLAPQ (314 aa)). A C-terminal hotdog fold region spans residues 1076–1237 (HSCVGSPLLY…LAVEATLAPQ (162 aa)). The tract at residues 1461 to 1747 (GMPDSLYLQR…SETDSKKLLL (287 aa)) is enoyl reductase (ER) domain. The interval 1771-1948 (AVYLLVGGSG…PATSLALTAV (178 aa)) is ketoreductase (KR) domain. In terms of domain architecture, Carrier spans 2059–2136 (EATQLLLAAI…KIVDSVIVKR (78 aa)). O-(pantetheine 4'-phosphoryl)serine is present on serine 2096.

The protein operates within mycotoxin biosynthesis. Functionally, reducing polyketide synthase (PKS); part of the Tox1A locus, one of the 2 loci that mediate the biosynthesis of T-toxin, a family of linear polyketides 37 to 45 carbons in length, of which the major component is 41 carbons, and which leads to high virulence to maize. One of the PKSs (PKS1 or PKS2) could synthesize a precursor, used subsequently by the other PKS as starter unit, to add additional carbons. Variability in the length of the final carbon backbone C35-47 could be achieved by varying the number of condensation cycles, or use of different starter or extender units or might be due to decarboxylation of the penultimate product, catalyzed by DEC1. Additional proteins are required for the biosynthesis of T-toxin, including oxidoreductases RED1, RED2, RED3, LAM1 and OXI1, as well as esterase TOX9. This Cochliobolus heterostrophus (strain C4 / ATCC 48331 / race T) (Southern corn leaf blight fungus) protein is Reducing polyketide synthase PKS2.